A 538-amino-acid polypeptide reads, in one-letter code: Syncytin-2 (538 aa).

The signal sequence occupies residues 1–15 (MGLLLLLLILTPLLA). The Extracellular segment spans residues 16–478 (AYCHPDFRLL…GWLNWEGTWK (463 aa)). The CXXC signature appears at 43–46 (CWLC). Disulfide bonds link C43–C46, C43–C439, and C431–C438. Residues N146, N177, N220, N241, N247, N312, and N332 are each glycosylated (N-linked (GlcNAc...) asparagine). Residues 354 to 374 (LIPLLVGLGIVGSAGTGIAGI) form a fusion peptide region. The CKS-17 motif lies at 414–430 (LQNRRGLDMLTAAQGGI). Positions 431–439 (CLALDEKCC) match the CX6CC motif. The N-linked (GlcNAc...) asparagine glycan is linked to N443. A helical membrane pass occupies residues 479 to 499 (WFSWVLPFTGPLVSLLLLLLF). At 500-538 (GPCLLNLITQFVSSRLQATKLQMKLNKRVHPRNSQESPF) the chain is on the cytoplasmic side.

This sequence belongs to the gamma type-C retroviral envelope protein family. HERV class-I FRD env subfamily. In terms of assembly, the surface and transmembrane proteins form a heterodimer. They are attached by non-covalent interactions or by a labile interchain disulfide bond. Specific enzymatic cleavages in vivo yield the mature SU and TM proteins. Post-translationally, the CXXC motif is highly conserved across a broad range of retroviral envelope proteins. It is thought to participate in the formation of a labile disulfide bond possibly with the CX6CC motif present in the transmembrane protein.

It localises to the virion. It is found in the cell membrane. Functionally, this endogenous retroviral envelope protein has retained its original fusogenic properties and participates in trophoblast fusion and the formation of a syncytium during placenta morphogenesis. The interaction with MFSD2A is apparently important for this process. Endogenous envelope proteins may have kept, lost or modified their original function during evolution but this one can still make pseudotypes with MLV, HIV-1 or SIV-1 virions and confer infectivity. Retroviral envelope proteins mediate receptor recognition and membrane fusion during early infection. The surface protein mediates receptor recognition, while the transmembrane protein anchors the envelope heterodimer to the viral membrane through one transmembrane domain. The other hydrophobic domain, called fusion peptide, mediates fusion of the viral membrane with the target cell membrane. The sequence is that of Syncytin-2 (ERVFRD-1) from Callithrix jacchus (White-tufted-ear marmoset).